We begin with the raw amino-acid sequence, 718 residues long: Polyribonucleotide nucleotidyltransferase (718 aa).

2 residues coordinate Mg(2+): Asp-496 and Asp-502. Residues 563–622 (PRLLTIKIDPDMIGLVIGPGGKTIKGITEETGAKIDIEDDGTVTISAVDENKAKRARNIV) form the KH domain. The S1 motif domain occupies 632 to 700 (GDVYAGRVTR…NKGRINLTRL (69 aa)).

As to quaternary structure, may form homodimers or higher order multimers. Interacts with RNase E (rne). Requires Mg(2+) as cofactor.

Its subcellular location is the cytoplasm. The enzyme catalyses RNA(n+1) + phosphate = RNA(n) + a ribonucleoside 5'-diphosphate. Functionally, involved in mRNA degradation. Catalyzes the phosphorolysis of single-stranded polyribonucleotides processively in the 3'- to 5'-direction. This Nostoc sp. (strain PCC 7120 / SAG 25.82 / UTEX 2576) protein is Polyribonucleotide nucleotidyltransferase.